A 164-amino-acid polypeptide reads, in one-letter code: Phosphohistidine phosphatase SixA homolog (164 aa).

The protein belongs to the SixA phosphatase family.

The sequence is that of Phosphohistidine phosphatase SixA homolog (sixA-A) from Haemophilus influenzae (strain ATCC 51907 / DSM 11121 / KW20 / Rd).